Reading from the N-terminus, the 169-residue chain is Crossover junction endodeoxyribonuclease RuvC (169 aa).

Residues aspartate 15, glutamate 75, and aspartate 147 contribute to the active site. 3 residues coordinate Mg(2+): aspartate 15, glutamate 75, and aspartate 147.

The protein belongs to the RuvC family. Homodimer which binds Holliday junction (HJ) DNA. The HJ becomes 2-fold symmetrical on binding to RuvC with unstacked arms; it has a different conformation from HJ DNA in complex with RuvA. In the full resolvosome a probable DNA-RuvA(4)-RuvB(12)-RuvC(2) complex forms which resolves the HJ. Mg(2+) is required as a cofactor.

It localises to the cytoplasm. The enzyme catalyses Endonucleolytic cleavage at a junction such as a reciprocal single-stranded crossover between two homologous DNA duplexes (Holliday junction).. In terms of biological role, the RuvA-RuvB-RuvC complex processes Holliday junction (HJ) DNA during genetic recombination and DNA repair. Endonuclease that resolves HJ intermediates. Cleaves cruciform DNA by making single-stranded nicks across the HJ at symmetrical positions within the homologous arms, yielding a 5'-phosphate and a 3'-hydroxyl group; requires a central core of homology in the junction. The consensus cleavage sequence is 5'-(A/T)TT(C/G)-3'. Cleavage occurs on the 3'-side of the TT dinucleotide at the point of strand exchange. HJ branch migration catalyzed by RuvA-RuvB allows RuvC to scan DNA until it finds its consensus sequence, where it cleaves and resolves the cruciform DNA. This Caulobacter sp. (strain K31) protein is Crossover junction endodeoxyribonuclease RuvC.